Consider the following 152-residue polypeptide: MFRGASSLSLDDKGRFAVPTKYRDDLLSEDQGTVICTVALNEPCLWLYPLAQWQEIESRLAKISNMNPRARRMQRMLLGNATEYQLDKNGRILLAPSLRAHADLGKKIMLVGLMNKFEIWDEARWHQQMRQDTELERLGDFEPHPDLDNFTL.

2 consecutive SpoVT-AbrB domains span residues alanine 5 to glutamine 52 and alanine 81 to arginine 124.

The protein belongs to the MraZ family. In terms of assembly, forms oligomers.

Its subcellular location is the cytoplasm. It localises to the nucleoid. The sequence is that of Transcriptional regulator MraZ from Pseudoalteromonas translucida (strain TAC 125).